The following is a 193-amino-acid chain: Selenate reductase assembly chaperone protein (193 aa).

This sequence belongs to the type II DMSO reductase enzyme chaperone family.

It is found in the cytoplasm. Its function is as follows. May function as a system-specific chaperone protein essential for the assembly of an active selenate reductase SerABC. This chain is Selenate reductase assembly chaperone protein, found in Thauera selenatis.